A 334-amino-acid chain; its full sequence is Probable tRNA pseudouridine synthase B (334 aa).

Aspartate 82 serves as the catalytic Nucleophile. The PUA domain maps to 250 to 325; sequence LPKVWIRDSA…IAVDVDKVFM (76 aa).

This sequence belongs to the pseudouridine synthase TruB family. Type 2 subfamily.

The catalysed reaction is uridine(55) in tRNA = pseudouridine(55) in tRNA. Functionally, could be responsible for synthesis of pseudouridine from uracil-55 in the psi GC loop of transfer RNAs. This Thermococcus onnurineus (strain NA1) protein is Probable tRNA pseudouridine synthase B.